The primary structure comprises 301 residues: Ethylmalonyl-CoA decarboxylase (301 aa).

Lysine 211 bears the N6-acetyllysine; alternate mark. Residue lysine 211 is modified to N6-succinyllysine; alternate. An N6-succinyllysine modification is found at lysine 295.

The protein belongs to the enoyl-CoA hydratase/isomerase family.

It is found in the cytoplasm. It localises to the cytosol. It carries out the reaction (2S)-ethylmalonyl-CoA + H(+) = butanoyl-CoA + CO2. The enzyme catalyses (S)-methylmalonyl-CoA + H(+) = propanoyl-CoA + CO2. The catalysed reaction is (2R)-ethylmalonyl-CoA + H(+) = butanoyl-CoA + CO2. Decarboxylates ethylmalonyl-CoA, a potentially toxic metabolite, to form butyryl-CoA, suggesting it might be involved in metabolite proofreading. Acts preferentially on (S)-ethylmalonyl-CoA but also has some activity on the (R)-isomer. Also has methylmalonyl-CoA decarboxylase activity at lower level. In Pongo abelii (Sumatran orangutan), this protein is Ethylmalonyl-CoA decarboxylase (ECHDC1).